Reading from the N-terminus, the 182-residue chain is Photosystem I assembly protein Ycf4 (182 aa).

Transmembrane regions (helical) follow at residues Trp-22–Leu-42 and Phe-66–Val-86.

Belongs to the Ycf4 family.

Its subcellular location is the plastid. The protein localises to the chloroplast thylakoid membrane. Functionally, seems to be required for the assembly of the photosystem I complex. The polypeptide is Photosystem I assembly protein Ycf4 (Tupiella akineta (Green alga)).